The following is a 240-amino-acid chain: Small ribosomal subunit protein uS2 (240 aa).

The protein belongs to the universal ribosomal protein uS2 family.

The sequence is that of Small ribosomal subunit protein uS2 (rpsB) from Pasteurella multocida (strain Pm70).